The chain runs to 539 residues: Cell division control protein 6 homolog (539 aa).

The tract at residues methionine 1 to isoleucine 40 is disordered. The Nuclear localization signal motif lies at arginine 35–lysine 38.

This sequence belongs to the CDC6/cdc18 family. In terms of tissue distribution, highly expressed in roots, flower buds and etiolated seedlings. Expressed in leaves and stems. Highly expressed in proliferating cells such as root meristems, leaf primordia and young growing leaves, as well as cells undergoing endoreduplication cycles.

Its subcellular location is the nucleus. In terms of biological role, may be involved in the initiation of DNA replication. May play a role in endoreduplication. Could act as one of the factors that contributes to maintain endoreduplication competence. This chain is Cell division control protein 6 homolog, found in Arabidopsis thaliana (Mouse-ear cress).